An 80-amino-acid chain; its full sequence is Protein UL148B (80 aa).

Residues 10–30 (AICVGLVMGVTVIASCALLVF) traverse the membrane as a helical segment.

Its subcellular location is the host membrane. The chain is Protein UL148B (UL148B) from Homo sapiens (Human).